The following is a 277-amino-acid chain: Zinc finger protein 511 (277 aa).

3 C2H2-type zinc fingers span residues 96–121 (FRCHIAGCKQLFDTLEGYEHHYNALH), 123–146 (NVCSNCKRSFPSNRLLEIHILEWH), and 160–185 (YECLVEGCGLKFKTSKERKDHLIRTH). The segment at 225-244 (ESSESMDFSLTPEPVETEPM) is disordered.

The protein belongs to the krueppel C2H2-type zinc-finger protein family.

The protein localises to the nucleus. In terms of biological role, may be involved in transcriptional regulation. The protein is Zinc finger protein 511 (znf511) of Danio rerio (Zebrafish).